A 441-amino-acid polypeptide reads, in one-letter code: Proline--tRNA ligase (441 aa).

Belongs to the class-II aminoacyl-tRNA synthetase family. ProS type 2 subfamily. As to quaternary structure, homodimer.

The protein localises to the cytoplasm. The enzyme catalyses tRNA(Pro) + L-proline + ATP = L-prolyl-tRNA(Pro) + AMP + diphosphate. In terms of biological role, catalyzes the attachment of proline to tRNA(Pro) in a two-step reaction: proline is first activated by ATP to form Pro-AMP and then transferred to the acceptor end of tRNA(Pro). The polypeptide is Proline--tRNA ligase (Methylorubrum populi (strain ATCC BAA-705 / NCIMB 13946 / BJ001) (Methylobacterium populi)).